The primary structure comprises 1019 residues: Photoactivated adenylate cyclase subunit alpha-like protein 1224-5/1F (1019 aa).

One can recognise a BLUF 1 domain in the interval 55 to 148 (LRRLMYLSAS…GRMYGWWHLK (94 aa)). The Guanylate cyclase 1 domain occupies 204 to 332 (VVTVIYLVEF…DWINSASRIT (129 aa)). In terms of domain architecture, BLUF 2 spans 467-559 (LITLTYISQA…GVYGSPLDMT (93 aa)). A Guanylate cyclase 2 domain is found at 615–744 (VMLATAISSF…EVRARVLEVE (130 aa)). Residues 825 to 863 (NISCRGGNPPAGGIPTSPKVRPPGRTNSVSSYTPDPKQA) are disordered.

Belongs to the adenylyl cyclase class-4/guanylyl cyclase family. Heterotetramer of two alpha and two beta subunits.

The protein resides in the cell projection. It localises to the cilium. The protein localises to the flagellum. The polypeptide is Photoactivated adenylate cyclase subunit alpha-like protein 1224-5/1F (Euglena gracilis).